Here is an 84-residue protein sequence, read N- to C-terminus: Beta-cardiotoxin CTX9 (84 aa).

A signal peptide spans 1-21 (MKTLLLTLVVVTIVCLDLGYT). Cystine bridges form between Cys-24–Cys-43, Cys-36–Cys-61, Cys-65–Cys-76, and Cys-77–Cys-82.

The protein belongs to the three-finger toxin family. Short-chain subfamily. Aminergic toxin sub-subfamily. As to expression, expressed by the venom gland.

The protein localises to the secreted. Acts as a beta-blocker by binding to beta-1 and beta-2 adrenergic receptors (ADRB1 and ADRB2). It dose-dependently decreases the heart rate (bradycardia), whereas conventional cardiotoxins increases it. At 100 mg/kg, intraperitoneal injection into mice provokes labored breathing, impaired locomotion, lack of response to external stimuli, and death (after 30 minutes). In Ophiophagus hannah (King cobra), this protein is Beta-cardiotoxin CTX9.